A 356-amino-acid chain; its full sequence is Alanine racemase (356 aa).

Lysine 35 serves as the catalytic Proton acceptor; specific for D-alanine. At lysine 35 the chain carries N6-(pyridoxal phosphate)lysine. Substrate is bound at residue arginine 130. The active-site Proton acceptor; specific for L-alanine is the tyrosine 253. Methionine 301 provides a ligand contact to substrate.

This sequence belongs to the alanine racemase family. Pyridoxal 5'-phosphate serves as cofactor.

The enzyme catalyses L-alanine = D-alanine. It participates in amino-acid biosynthesis; D-alanine biosynthesis; D-alanine from L-alanine: step 1/1. Its function is as follows. Catalyzes the interconversion of L-alanine and D-alanine. May also act on other amino acids. This Erwinia tasmaniensis (strain DSM 17950 / CFBP 7177 / CIP 109463 / NCPPB 4357 / Et1/99) protein is Alanine racemase (alr).